Reading from the N-terminus, the 191-residue chain is Polysulfide reductase chain B (191 aa).

4Fe-4S ferredoxin-type domains lie at 5-34 (YGMI…PDSV), 50-83 (GTLS…VNED), and 84-113 (GIVS…VDPV). [4Fe-4S] cluster-binding residues include Cys14, Cys17, Cys20, Cys24, Cys61, Cys64, Cys69, Cys73, Cys93, Cys96, Cys99, Cys103, Cys120, Cys123, Cys136, and Cys140.

Functional polysulfide reductase is made up of three different (A, B, and C) subunits.

Functionally, component of the phosphorylative electron transport system with polysulfide as the terminal acceptor. The chain is Polysulfide reductase chain B (psrB) from Wolinella succinogenes (strain ATCC 29543 / DSM 1740 / CCUG 13145 / JCM 31913 / LMG 7466 / NCTC 11488 / FDC 602W) (Vibrio succinogenes).